A 419-amino-acid chain; its full sequence is Esterase FrsA (419 aa).

The protein belongs to the FrsA family.

It catalyses the reaction a carboxylic ester + H2O = an alcohol + a carboxylate + H(+). Catalyzes the hydrolysis of esters. This is Esterase FrsA from Photobacterium profundum (strain SS9).